Here is a 540-residue protein sequence, read N- to C-terminus: Cystathionine gamma-synthase 1, chloroplastic (540 aa).

A chloroplast-targeting transit peptide spans 1–78 (MAVSSCARAF…RNCSNIGVAQ (78 aa)). The pyridoxal 5'-phosphate site is built by tyrosine 203, arginine 205, glycine 233, methionine 234, tyrosine 258, serine 353, and threonine 355. N6-(pyridoxal phosphate)lysine is present on lysine 356.

It belongs to the trans-sulfuration enzymes family. As to quaternary structure, forms homotetramers composed of 2 homodimers. The cofactor is pyridoxal 5'-phosphate.

The protein localises to the plastid. It localises to the chloroplast. It carries out the reaction O-phospho-L-homoserine + L-cysteine = L,L-cystathionine + phosphate. The enzyme catalyses O-succinyl-L-homoserine + L-cysteine = L,L-cystathionine + succinate + H(+). The protein operates within amino-acid biosynthesis; L-methionine biosynthesis via de novo pathway; L-cystathionine from O-succinyl-L-homoserine: step 1/1. Its activity is regulated as follows. Irreversibly inactivated by DL-propargylglycine. Functionally, catalyzes the first committed step of methionine (Met) biosynthesis. Catalyzes the formation of L-cystathionine from homoserine esters and L-cysteine, via a gamma-replacement reaction. The polypeptide is Cystathionine gamma-synthase 1, chloroplastic (Nicotiana tabacum (Common tobacco)).